Here is a 66-residue protein sequence, read N- to C-terminus: ATP synthase F(0) complex subunit 8 (66 aa).

A helical transmembrane segment spans residues threonine 8–phenylalanine 24. Residue lysine 54 is modified to N6-acetyllysine; alternate. N6-succinyllysine; alternate is present on lysine 54. Lysine 57 is subject to N6-acetyllysine.

This sequence belongs to the ATPase protein 8 family. As to quaternary structure, component of the ATP synthase complex composed at least of ATP5F1A/subunit alpha, ATP5F1B/subunit beta, ATP5MC1/subunit c (homooctomer), MT-ATP6/subunit a, MT-ATP8/subunit 8, ATP5ME/subunit e, ATP5MF/subunit f, ATP5MG/subunit g, ATP5MK/subunit k, ATP5MJ/subunit j, ATP5F1C/subunit gamma, ATP5F1D/subunit delta, ATP5F1E/subunit epsilon, ATP5PF/subunit F6, ATP5PB/subunit b, ATP5PD/subunit d, ATP5PO/subunit OSCP. ATP synthase complex consists of a soluble F(1) head domain (subunits alpha(3) and beta(3)) - the catalytic core - and a membrane F(0) domain - the membrane proton channel (subunits c, a, 8, e, f, g, k and j). These two domains are linked by a central stalk (subunits gamma, delta, and epsilon) rotating inside the F1 region and a stationary peripheral stalk (subunits F6, b, d, and OSCP). Interacts with PRICKLE3.

The protein resides in the mitochondrion membrane. Subunit 8, of the mitochondrial membrane ATP synthase complex (F(1)F(0) ATP synthase or Complex V) that produces ATP from ADP in the presence of a proton gradient across the membrane which is generated by electron transport complexes of the respiratory chain. ATP synthase complex consist of a soluble F(1) head domain - the catalytic core - and a membrane F(1) domain - the membrane proton channel. These two domains are linked by a central stalk rotating inside the F(1) region and a stationary peripheral stalk. During catalysis, ATP synthesis in the catalytic domain of F(1) is coupled via a rotary mechanism of the central stalk subunits to proton translocation. In vivo, can only synthesize ATP although its ATP hydrolase activity can be activated artificially in vitro. Part of the complex F(0) domain. This Bos mutus grunniens (Wild yak) protein is ATP synthase F(0) complex subunit 8.